The sequence spans 774 residues: Lysyl oxidase homolog 2 (774 aa).

The N-terminal stretch at 1–25 (MERPLCSHLCSCLAVLALLSPLSLA) is a signal peptide. 4 SRCR domains span residues 58 to 159 (LRLA…VVCS), 188 to 302 (IRAI…VSCV), 326 to 425 (VRLR…VRCN), and 435 to 544 (LRLN…VACS). Intrachain disulfides connect cysteine 84/cysteine 148, cysteine 97/cysteine 158, cysteine 128/cysteine 138, cysteine 218/cysteine 291, cysteine 231/cysteine 301, cysteine 265/cysteine 275, cysteine 351/cysteine 414, cysteine 364/cysteine 424, and cysteine 395/cysteine 405. A glycan (N-linked (GlcNAc...) asparagine) is linked at asparagine 288. N-linked (GlcNAc...) asparagine glycosylation is present at asparagine 455. 3 disulfide bridges follow: cysteine 464/cysteine 530, cysteine 477/cysteine 543, and cysteine 511/cysteine 521. Positions 548 to 751 (PDLVLNAEMV…WMYNCHIGGS (204 aa)) are lysyl-oxidase like. Ca(2+) contacts are provided by aspartate 549 and leucine 550. Cystine bridges form between cysteine 573–cysteine 625, cysteine 579–cysteine 695, cysteine 657–cysteine 673, and cysteine 663–cysteine 685. Cu cation contacts are provided by histidine 626, histidine 628, and histidine 630. Residue asparagine 644 is glycosylated (N-linked (GlcNAc...) asparagine). Residues 653–689 (KASFCLEDTECEGDIQKNYECANFGDQGITMGCWDMY) constitute a cross-link (lysine tyrosylquinone (Lys-Tyr)). At tyrosine 689 the chain carries 2',4',5'-topaquinone. Ca(2+) contacts are provided by glutamate 722, aspartate 724, asparagine 727, and asparagine 728. The cysteines at positions 732 and 746 are disulfide-linked.

It belongs to the lysyl oxidase family. Component of some chromatin repressor complex. Interacts with SNAI1. Interacts with TAF10. Interacts with HSPA5. Interacts with EFEMP2. The cofactor is Cu cation. Lysine tyrosylquinone residue is required as a cofactor. The lysine tyrosylquinone cross-link (LTQ) is generated by condensation of the epsilon-amino group of a lysine with a topaquinone produced by oxidation of tyrosine. Post-translationally, N-glycosylated. N-glycosylation on Asn-455 and Asn-644 may be essential for proper folding and secretion; may be composed of a fucosylated carbohydrates attached to a trimannose N-linked glycan core.

Its subcellular location is the secreted. The protein localises to the extracellular space. It is found in the extracellular matrix. The protein resides in the basement membrane. It localises to the nucleus. Its subcellular location is the chromosome. The protein localises to the endoplasmic reticulum. It carries out the reaction L-lysyl-[protein] + O2 + H2O = (S)-2-amino-6-oxohexanoyl-[protein] + H2O2 + NH4(+). Its activity is regulated as follows. Specifically inhibited by a mouse monoclonal antibody AB0023, inhibition occurs in a non-competitive manner. Its function is as follows. Mediates the post-translational oxidative deamination of lysine residues on target proteins leading to the formation of deaminated lysine (allysine). Acts as a transcription corepressor and specifically mediates deamination of trimethylated 'Lys-4' of histone H3 (H3K4me3), a specific tag for epigenetic transcriptional activation. Shows no activity against histone H3 when it is trimethylated on 'Lys-9' (H3K9me3) or 'Lys-27' (H3K27me3) or when 'Lys-4' is monomethylated (H3K4me1) or dimethylated (H3K4me2). Also mediates deamination of methylated TAF10, a member of the transcription factor IID (TFIID) complex, which induces release of TAF10 from promoters, leading to inhibition of TFIID-dependent transcription. LOXL2-mediated deamination of TAF10 results in transcriptional repression of genes required for embryonic stem cell pluripotency including POU5F1/OCT4, NANOG, KLF4 and SOX2. Involved in epithelial to mesenchymal transition (EMT) via interaction with SNAI1 and participates in repression of E-cadherin CDH1, probably by mediating deamination of histone H3. During EMT, involved with SNAI1 in negatively regulating pericentromeric heterochromatin transcription. SNAI1 recruits LOXL2 to pericentromeric regions to oxidize histone H3 and repress transcription which leads to release of heterochromatin component CBX5/HP1A, enabling chromatin reorganization and acquisition of mesenchymal traits. Interacts with the endoplasmic reticulum protein HSPA5 which activates the IRE1-XBP1 pathway of the unfolded protein response, leading to expression of several transcription factors involved in EMT and subsequent EMT induction. When secreted into the extracellular matrix, promotes cross-linking of extracellular matrix proteins by mediating oxidative deamination of peptidyl lysine residues in precursors to fibrous collagen and elastin. Acts as a regulator of sprouting angiogenesis, probably via collagen IV scaffolding. Acts as a regulator of chondrocyte differentiation, probably by regulating expression of factors that control chondrocyte differentiation. This Pongo abelii (Sumatran orangutan) protein is Lysyl oxidase homolog 2 (LOXL2).